A 126-amino-acid chain; its full sequence is C-type natriuretic peptide 1 (126 aa).

A signal peptide spans 1–22 (MLCPALLCAALLLLTPVEITDA). The propeptide occupies 23–104 (RALQQPSDAA…KRAEPDRSRR (82 aa)). A disulfide bridge links cysteine 110 with cysteine 126.

It belongs to the natriuretic peptide family.

It localises to the secreted. In terms of biological role, exhibits natriuretic and vasodepressant activity. Has cGMP-stimulating activity. May help to regulate body fluid homeostasis in a variety of aquatic environments. This is C-type natriuretic peptide 1 from Takifugu rubripes (Japanese pufferfish).